The following is a 708-amino-acid chain: Leukotoxin translocation ATP-binding protein LktB (708 aa).

Residues 1-126 (MEANHQRNDL…ACYQGQLILV (126 aa)) enclose the Peptidase C39 domain. The ABC transmembrane type-1 domain occupies 155 to 437 (FLETLIVSIF…LAQLWQDFQQ (283 aa)). 5 helical membrane-spanning segments follow: residues 159–179 (LIVS…FQVV), 192–212 (LNII…LSGL), 270–290 (ALTS…MWYY), 296–316 (LVIL…SPIL), and 389–409 (VMVI…LSIG). The 236-residue stretch at 469–704 (ISFKNIRFRY…SNGLYSYLHQ (236 aa)) folds into the ABC transporter domain. 503–510 (GRSGSGKS) is a binding site for ATP.

It belongs to the ABC transporter superfamily. Protein-1 exporter (TC 3.A.1.109) family. Homodimer.

It is found in the cell inner membrane. The catalysed reaction is ATP + H2O + proteinSide 1 = ADP + phosphate + proteinSide 2.. Its function is as follows. Part of the ABC transporter complex LktBD involved in leukotoxin export. Transmembrane domains (TMD) form a pore in the inner membrane and the ATP-binding domain (NBD) is responsible for energy generation. The protein is Leukotoxin translocation ATP-binding protein LktB (lktB) of Mannheimia haemolytica (Pasteurella haemolytica).